The chain runs to 449 residues: MSHITFDYSKVLESFAGQHEIDFLQGQVTEADKLLREGTGPGSDFLGWLDLPENYDKEEFARILTAAEKIKADSEVLVVIGIGGSYLGAKAAIDFLNHHFANLQTAKERKAPQILYAGNSISSTYLADLVEYVQDKEFSVNVISKSGTTTEPAIAFRVFKELLVKKYGQEEANKRIYATTDKVKGAVKVEADANNWETFVVPDNVGGRFSVLTAVGLLPIAASGADITALMEGANAARKDLSSDKISENIAYQYAAVRNVLYRKGYITEILANYEPSLQYLGEWWKQLAGESEGKDQKGIYPTSANFSTDLHSLGQFIQEGYRNLFETVIRVDNPRKNVIIPELAEDLDGLGYLQGKDVDFVNKKATDGVLLAHTDGGVPNMFVTLPAQDEFTLGYTIYFFELAIAVSGYMNAVNPFDQPGVEAYKRNMFALLGKPGFEALSAELNARL.

Glu291 (proton donor) is an active-site residue. Residues His312 and Lys426 contribute to the active site.

Belongs to the GPI family.

It localises to the cytoplasm. The catalysed reaction is alpha-D-glucose 6-phosphate = beta-D-fructose 6-phosphate. Its pathway is carbohydrate biosynthesis; gluconeogenesis. It participates in carbohydrate degradation; glycolysis; D-glyceraldehyde 3-phosphate and glycerone phosphate from D-glucose: step 2/4. Catalyzes the reversible isomerization of glucose-6-phosphate to fructose-6-phosphate. The sequence is that of Glucose-6-phosphate isomerase from Streptococcus pyogenes serotype M6 (strain ATCC BAA-946 / MGAS10394).